Consider the following 392-residue polypeptide: Acetyl-CoA acetyltransferase (392 aa).

Catalysis depends on Cys85, which acts as the Acyl-thioester intermediate. CoA-binding residues include Cys206, Ser207, Val209, and Lys332. His336 acts as the Proton acceptor in catalysis.

Belongs to the thiolase-like superfamily. Thiolase family. As to quaternary structure, interacts with HMG-CoA synthase (HMGCS) that catalyzes the second step in the pathway and with a DUF35 protein. The acetoacetyl-CoA thiolase/HMG-CoA synthase complex channels the intermediate via a fused CoA-binding site, which allows for efficient coupling of the endergonic thiolase reaction with the exergonic HMGCS reaction.

The enzyme catalyses 2 acetyl-CoA = acetoacetyl-CoA + CoA. The protein operates within metabolic intermediate biosynthesis; (R)-mevalonate biosynthesis; (R)-mevalonate from acetyl-CoA: step 1/3. Its function is as follows. Catalyzes the condensation of two acetyl-coA molecules into acetoacetyl-CoA. Functions in the mevalonate (MVA) pathway leading to isopentenyl diphosphate (IPP), a key precursor for the biosynthesis of isoprenoid compounds that are building blocks of archaeal membrane lipids. This is Acetyl-CoA acetyltransferase from Methanothermococcus thermolithotrophicus (Methanococcus thermolithotrophicus).